A 503-amino-acid polypeptide reads, in one-letter code: Serine/threonine-protein kinase chk-1 (503 aa).

Positions 24 to 286 (YRVVQTLGEG…IEQIQADPWY (263 aa)) constitute a Protein kinase domain. ATP-binding positions include 30 to 38 (LGEGAFGEV) and K54. Catalysis depends on D150, which acts as the Proton acceptor. The interval 320-346 (SAKRRHLETPNEKSTLAERQNASFSQP) is disordered. Residues 331–346 (EKSTLAERQNASFSQP) show a composition bias toward polar residues. Phosphoserine is present on S344.

It belongs to the protein kinase superfamily. CAMK Ser/Thr protein kinase family. NIM1 subfamily. As to expression, expressed in the germline.

The protein localises to the cytoplasm. It localises to the nucleus. The protein resides in the perinuclear region. It carries out the reaction L-seryl-[protein] + ATP = O-phospho-L-seryl-[protein] + ADP + H(+). The catalysed reaction is L-threonyl-[protein] + ATP = O-phospho-L-threonyl-[protein] + ADP + H(+). In terms of biological role, serine/threonine-protein kinase which is required for checkpoint-mediated cell cycle arrest and activation of DNA repair in response to the presence of DNA damage or unreplicated DNA. May also negatively regulate cell cycle progression during unperturbed cell cycles. Required for checkpoint mediated cell cycle arrest in response to DNA damage in germline cells. Delays cell-cycle reentry of the Z2 and Z3 primordial germ cells in response to transcription-induced DNA damage as they emerge from cell cycle arrest in L1 larvae. Essential for embryogenesis. In Caenorhabditis elegans, this protein is Serine/threonine-protein kinase chk-1.